A 620-amino-acid polypeptide reads, in one-letter code: DNA primase (620 aa).

Residues 38–62 form a CHC2-type zinc finger; sequence CPFHADQNPSMTVSVAKNIFKCFSC. A Toprim domain is found at 266-350; it reads LKLYLVEGYF…IVEVVDWNQA (85 aa). Residues E272, D319, and D321 each coordinate Mg(2+).

Belongs to the DnaG primase family. In terms of assembly, monomer. Interacts with DnaB. It depends on Zn(2+) as a cofactor. Requires Mg(2+) as cofactor.

The enzyme catalyses ssDNA + n NTP = ssDNA/pppN(pN)n-1 hybrid + (n-1) diphosphate.. Functionally, RNA polymerase that catalyzes the synthesis of short RNA molecules used as primers for DNA polymerase during DNA replication. This chain is DNA primase, found in Mycoplasma pneumoniae (strain ATCC 29342 / M129 / Subtype 1) (Mycoplasmoides pneumoniae).